The chain runs to 190 residues: GTP cyclohydrolase 1 (190 aa).

Residues cysteine 75, histidine 78, and cysteine 146 each contribute to the Zn(2+) site.

The protein belongs to the GTP cyclohydrolase I family. In terms of assembly, toroid-shaped homodecamer, composed of two pentamers of five dimers.

It carries out the reaction GTP + H2O = 7,8-dihydroneopterin 3'-triphosphate + formate + H(+). It functions in the pathway cofactor biosynthesis; 7,8-dihydroneopterin triphosphate biosynthesis; 7,8-dihydroneopterin triphosphate from GTP: step 1/1. The sequence is that of GTP cyclohydrolase 1 from Campylobacter jejuni subsp. jejuni serotype O:23/36 (strain 81-176).